The sequence spans 231 residues: Large ribosomal subunit protein uL1 (231 aa).

It belongs to the universal ribosomal protein uL1 family. Part of the 50S ribosomal subunit.

Functionally, binds directly to 23S rRNA. The L1 stalk is quite mobile in the ribosome, and is involved in E site tRNA release. In terms of biological role, protein L1 is also a translational repressor protein, it controls the translation of the L11 operon by binding to its mRNA. The chain is Large ribosomal subunit protein uL1 from Neisseria meningitidis serogroup A / serotype 4A (strain DSM 15465 / Z2491).